Here is a 126-residue protein sequence, read N- to C-terminus: Small ribosomal subunit protein uS13c (126 aa).

The tract at residues 97-126 (PLRGQRTRTNARTRRGGKKTVAGKKKAPRK) is disordered. Basic residues predominate over residues 101-126 (QRTRTNARTRRGGKKTVAGKKKAPRK).

It belongs to the universal ribosomal protein uS13 family. Part of the 30S ribosomal subunit.

The protein resides in the plastid. Its subcellular location is the chloroplast. Functionally, located at the top of the head of the 30S subunit, it contacts several helices of the 16S rRNA. The sequence is that of Small ribosomal subunit protein uS13c from Pyropia yezoensis (Susabi-nori).